Here is a 317-residue protein sequence, read N- to C-terminus: Lactamase-like protein adaB (317 aa).

Residues histidine 97, histidine 99, aspartate 101, and histidine 102 each contribute to the Zn(2+) site. The active-site Proton donor/acceptor is aspartate 101.

This sequence belongs to the metallo-beta-lactamase superfamily. The cofactor is Zn(2+).

It catalyses the reaction 3-(2,4-dioxopentyl)-2,3,6,8,9-pentahydroxy-1-oxo-1,2,3,4-tetrahydroanthracene-2-carboxyl-[ACP] = 2-acetyl-3,4a,8,10,11,12a-hexahydroxy-1,4,4a,5,12,12a-hexahydrotetracene-1,12-dione + holo-[ACP] + H(+). It functions in the pathway secondary metabolite biosynthesis. Its function is as follows. Lactamase-like protein; part of the gene cluster that mediates the biosynthesis of the linear tetracyclic TAN-1612 neuropeptide Y receptor antagonist. The decaketide backbone of TAN-1612 is synthesized by the non-reducing polyketide synthase adaA via condensation of one acetyl-CoA starter unit with 9 malonyl-CoA units. The FAD-dependent monooxygenase adaC then performs hydroxylation at C2 while the polaketide chain is still attached to the NRPKS adaA. The alpha-hydroxylation step at C2 appears to be crucial for the following C18-C1 Claisen cyclization and release of the C9-hydroxyl version of TAN-1612 from the NRPKS adaA, two steps performed by the lactamase-like protein adaB. Finally, the O-methyltransferase adaD performs the C9 O-methylation to complete the biosynthesis of TAN-1612. The sequence is that of Lactamase-like protein adaB from Aspergillus niger (strain ATCC MYA-4892 / CBS 513.88 / FGSC A1513).